The primary structure comprises 132 residues: NADPH-dependent 7-cyano-7-deazaguanine reductase (132 aa).

C43 serves as the catalytic Thioimide intermediate. The active-site Proton donor is D50. Substrate is bound by residues 65–67 (VEL) and 84–85 (HE).

It belongs to the GTP cyclohydrolase I family. QueF type 1 subfamily.

The protein resides in the cytoplasm. The enzyme catalyses 7-aminomethyl-7-carbaguanine + 2 NADP(+) = 7-cyano-7-deazaguanine + 2 NADPH + 3 H(+). It participates in tRNA modification; tRNA-queuosine biosynthesis. Catalyzes the NADPH-dependent reduction of 7-cyano-7-deazaguanine (preQ0) to 7-aminomethyl-7-deazaguanine (preQ1). The protein is NADPH-dependent 7-cyano-7-deazaguanine reductase of Thermosynechococcus vestitus (strain NIES-2133 / IAM M-273 / BP-1).